We begin with the raw amino-acid sequence, 157 residues long: Molybdopterin synthase catalytic subunit (157 aa).

Residues 103–104 (HR), Lys-119, and 126–128 (KKE) contribute to the substrate site.

This sequence belongs to the MoaE family. MOCS2B subfamily. Heterotetramer; composed of 2 small (MOCS2A) and 2 large (MOCS2B) subunits.

It is found in the cytoplasm. The catalysed reaction is 2 [molybdopterin-synthase sulfur-carrier protein]-C-terminal-Gly-aminoethanethioate + cyclic pyranopterin phosphate + H2O = molybdopterin + 2 [molybdopterin-synthase sulfur-carrier protein]-C-terminal Gly-Gly + 2 H(+). Its pathway is cofactor biosynthesis; molybdopterin biosynthesis. Its function is as follows. Catalytic subunit of the molybdopterin synthase complex, a complex that catalyzes the conversion of precursor Z into molybdopterin. Acts by mediating the incorporation of 2 sulfur atoms from thiocarboxylated MOCS2A into precursor Z to generate a dithiolene group. The chain is Molybdopterin synthase catalytic subunit from Culex quinquefasciatus (Southern house mosquito).